A 102-amino-acid chain; its full sequence is RNA-binding protein Hfq (102 aa).

The Sm domain maps to 9–68 (DPFLNALRRERVPVSIYLVNGIKLQGQIESFDQFVILLKNTVSQMVYKHAISTVVPSRPV). Residues 64–102 (PSRPVSHHSNTPSGGTSNYHHGNNPSAPQQPQQESDDAE) are disordered. Polar residues predominate over residues 70–96 (HHSNTPSGGTSNYHHGNNPSAPQQPQQ).

Belongs to the Hfq family. Homohexamer.

Functionally, RNA chaperone that binds small regulatory RNA (sRNAs) and mRNAs to facilitate mRNA translational regulation in response to envelope stress, environmental stress and changes in metabolite concentrations. Also binds with high specificity to tRNAs. This Serratia proteamaculans (strain 568) protein is RNA-binding protein Hfq.